The following is a 33-amino-acid chain: Ranatuerin-1T (33 aa).

A disulfide bridge links cysteine 27 with cysteine 33.

In terms of tissue distribution, expressed by the skin glands.

The protein localises to the secreted. Its function is as follows. Antibacterial activity against Gram-positive bacterium S.aureus and Gram-negative bacterium E.coli. No activity against C.albicans. In Rana temporaria (European common frog), this protein is Ranatuerin-1T.